The primary structure comprises 580 residues: Type 3 secretion system translocon protein SctE (580 aa).

IpgC chaperone binding domain stretches follow at residues Lys15–Leu45 and Ile51–Ser72. Residues Asn61–Pro70 are mediates interaction with human MAD2L2. A coiled-coil region spans residues Ala104–Phe224. 2 helical membrane passes run Ile313–Ser333 and Ile399–Val419.

The protein belongs to the SctE/SipB/YopB family. As to quaternary structure, the core secretion machinery of the T3SS is composed of approximately 20 different proteins, including cytoplasmic components, a base, an export apparatus and a needle. This subunit is involved in the formation of a pore, called the translocon, in host membrane. Interacts with IpaC/SctB. Interacts with the needle tip protein IpaD/SctA. Interacts with the molecular chaperone IpgC, which prevents premature association with IpaC/SctB within the cytoplasm of Shigella cells and protects IpaB/SctE from proteolysis. Interacts with the host protein ICE in the cytoplasm of infected macrophages. Interacts with human MAD2L2 in the G2/M phase of the cell cycle.

Its subcellular location is the secreted. It localises to the host membrane. The protein resides in the host cell. The protein localises to the host nucleus. Interaction with the membrane is affected by the pH. IpaB/SctE is more efficient in destabilizing the membrane at pH 5.0 than at neutral pH. Component of the type III secretion system (T3SS), also called injectisome, which is used to inject bacterial effector proteins into eukaryotic host cells. IpaB/SctE and IpaC/SctB are inserted into the host membrane where they form a pore and allow the translocation of effector proteins into the cytosol of target cells. Interaction with IpaD/SctA at needle tips leads to the formation of the MxiH/SctF-IpaD/SctA-IpaB/SctE ternary complex, which is essential for host cell sensing. Interaction of IpaB/SctE with host membrane lipids promotes recruitment of IpaC/SctB at the needle tip concomitant with translocon insertion into the host membrane and type III secretion induction. In terms of biological role, required for efficient dissemination. Necessary for lysis of the two cellular membranes that surround bacteria in protrusions during cell-to-cell spread. Is sufficient to induce macrophage apoptosis through activation of the interleukin-1 beta converting enzyme (ICE) in infected macrophages. In epithelial cells, causes cell-cycle arrest by targeting host MAD2L2, an anaphase-promoting complex/cyclosome (APC) inhibitor. The protein is Type 3 secretion system translocon protein SctE of Shigella flexneri.